The sequence spans 421 residues: Testin (421 aa).

Residues 92–199 (MILTNPVAAK…GDVKLPREMD (108 aa)) form the PET domain. The disordered stretch occupies residues 133-164 (EKQPVAGSEGAQYRKKQLAKQLPAHDQDPSKC). Basic and acidic residues predominate over residues 155-164 (PAHDQDPSKC). LIM zinc-binding domains follow at residues 234–297 (YSCY…CDSE), 299–359 (PRCA…NHAV), and 362–421 (QGCH…KMMS).

Belongs to the prickle / espinas / testin family. As to quaternary structure, interacts via LIM domain 1 with ZYX. Interacts (via LIM domain 3) with ENAH and VASP. Interacts with ALKBH4, talin, actin, alpha-actinin, GRIP1 and PXN. Interacts (via LIM domain 2) with ACTL7A (via N-terminus). Heterodimer with ACTL7A; the heterodimer interacts with ENAH to form a heterotrimer.

Its subcellular location is the cytoplasm. It is found in the cell junction. The protein resides in the focal adhesion. Its function is as follows. Scaffold protein that may play a role in cell adhesion, cell spreading and in the reorganization of the actin cytoskeleton. Plays a role in the regulation of cell proliferation. May act as a tumor suppressor. The protein is Testin (TES) of Neofelis nebulosa (Clouded leopard).